The primary structure comprises 160 residues: Small ribosomal subunit protein uS19 (160 aa).

The segment at Met1–Arg27 is disordered.

This sequence belongs to the universal ribosomal protein uS19 family.

Protein S19 forms a complex with S13 that binds strongly to the 16S ribosomal RNA. The protein is Small ribosomal subunit protein uS19 of Methanococcus vannielii (strain ATCC 35089 / DSM 1224 / JCM 13029 / OCM 148 / SB).